The chain runs to 400 residues: Transcription initiation factor IIF subunit beta (400 aa).

Polar residues predominate over residues 1–19 (MSSGSAGAPALSNNSTNSV). A disordered region spans residues 1 to 47 (MSSGSAGAPALSNNSTNSVAKEKSGNISGDEYLSQEEEVFDGNDIEN). A phosphoserine mark is found at Ser28, Ser34, and Ser56. Residues 33–47 (LSQEEEVFDGNDIEN) are compositionally biased toward acidic residues. Disordered stretches follow at residues 165–194 (QERE…VMTD) and 366–400 (TLGE…EDVV). A compositionally biased stretch (basic residues) spans 174-189 (KQQQQKRRNNRKKFNH). The segment covering 386–400 (AEADLEDEIEMEDVV) has biased composition (acidic residues).

Belongs to the TFIIF beta subunit family. As to quaternary structure, TFIIF is composed of three different subunits: TFG1/RAP74, TFG2/RAP30 and TAF14.

It is found in the nucleus. TFIIF is a general transcription initiation factor that binds to RNA polymerase II. Its functions include the recruitment of RNA polymerase II to the promoter bound DNA-TBP-TFIIB complex, decreasing the affinity of RNA polymerase II for non-specific DNA, allowing for the subsequent recruitment of TFIIE and TFIIH, and facilitating RNA polymerase II elongation. This chain is Transcription initiation factor IIF subunit beta (TFG2), found in Saccharomyces cerevisiae (strain ATCC 204508 / S288c) (Baker's yeast).